Here is a 306-residue protein sequence, read N- to C-terminus: Phosphoribosylaminoimidazole-succinocarboxamide synthase (306 aa).

N-acetylserine is present on Ser2.

Belongs to the SAICAR synthetase family. As to quaternary structure, monomer.

It catalyses the reaction 5-amino-1-(5-phospho-D-ribosyl)imidazole-4-carboxylate + L-aspartate + ATP = (2S)-2-[5-amino-1-(5-phospho-beta-D-ribosyl)imidazole-4-carboxamido]succinate + ADP + phosphate + 2 H(+). It functions in the pathway purine metabolism; IMP biosynthesis via de novo pathway; 5-amino-1-(5-phospho-D-ribosyl)imidazole-4-carboxamide from 5-amino-1-(5-phospho-D-ribosyl)imidazole-4-carboxylate: step 1/2. Its function is as follows. Catalyzes the reaction of 4-carboxy-5-aminoimidazole ribotide (CAIR) and aspartic acid with the formation of N-succinyl-5-amino-imidazole-4-carboxamide ribotide (SAICAR) in the purine biosynthesis pathway. This is Phosphoribosylaminoimidazole-succinocarboxamide synthase (ADE1) from Saccharomyces cerevisiae (strain ATCC 204508 / S288c) (Baker's yeast).